The chain runs to 351 residues: Phospho-N-acetylmuramoyl-pentapeptide-transferase (351 aa).

Helical transmembrane passes span 17–37 (TAYATIFAFLLALIFGPFIIS), 61–83 (MGIPTMGGVLIFFCVLVSLFFWI), 88–105 (IYFLIVLFVMVSFACLGF), 130–150 (ILFSFISVVMLYYFGGEHVSI), 158–178 (SLKLDLGILYIPFGMFVLISA), 190–210 (GLAIGLSIVVIGALIIIAYLT), 230–250 (LVIFLGALLGGSFGFLWFNAY), 254–274 (IMMGDTGSLSIGAVLGMVALI), 279–299 (ILFAILAGVFVVETLSVIIQV), and 328–348 (QVVIRFWIIGLIFAILALSTI).

The protein belongs to the glycosyltransferase 4 family. MraY subfamily. Requires Mg(2+) as cofactor.

The protein resides in the cell inner membrane. The enzyme catalyses UDP-N-acetyl-alpha-D-muramoyl-L-alanyl-gamma-D-glutamyl-meso-2,6-diaminopimeloyl-D-alanyl-D-alanine + di-trans,octa-cis-undecaprenyl phosphate = di-trans,octa-cis-undecaprenyl diphospho-N-acetyl-alpha-D-muramoyl-L-alanyl-D-glutamyl-meso-2,6-diaminopimeloyl-D-alanyl-D-alanine + UMP. It functions in the pathway cell wall biogenesis; peptidoglycan biosynthesis. In terms of biological role, catalyzes the initial step of the lipid cycle reactions in the biosynthesis of the cell wall peptidoglycan: transfers peptidoglycan precursor phospho-MurNAc-pentapeptide from UDP-MurNAc-pentapeptide onto the lipid carrier undecaprenyl phosphate, yielding undecaprenyl-pyrophosphoryl-MurNAc-pentapeptide, known as lipid I. The chain is Phospho-N-acetylmuramoyl-pentapeptide-transferase from Borrelia duttonii (strain Ly).